The following is a 170-amino-acid chain: N-alpha-acetyltransferase 50 (170 aa).

An N-acetyltransferase domain is found at 6–155 (IELGDVTPHN…DAHVLQKNLK (150 aa)). Y31 is a substrate binding site. Residue Y73 is part of the active site. Substrate is bound at residue M75. Position 77-90 (77-90 (LGCLAPYRRLGIGT)) interacts with acetyl-CoA. CoA is bound at residue 79 to 90 (CLAPYRRLGIGT). H112 is an active-site residue. A CoA-binding site is contributed by 117 to 126 (NESAIDFYRK). Residues 138-141 (YYKR) form a substrate region.

The protein belongs to the acetyltransferase family. GNAT subfamily.

It is found in the cytoplasm. The protein resides in the nucleus. It catalyses the reaction N-terminal L-methionyl-L-alanyl-[protein] + acetyl-CoA = N-terminal N(alpha)-acetyl-L-methionyl-L-alanyl-[protein] + CoA + H(+). The enzyme catalyses N-terminal L-methionyl-L-seryl-[protein] + acetyl-CoA = N-terminal N(alpha)-acetyl-L-methionyl-L-seryl-[protein] + CoA + H(+). It carries out the reaction N-terminal L-methionyl-L-valyl-[protein] + acetyl-CoA = N-terminal N(alpha)-acetyl-L-methionyl-L-valyl-[protein] + CoA + H(+). The catalysed reaction is N-terminal L-methionyl-L-threonyl-[protein] + acetyl-CoA = N-terminal N(alpha)-acetyl-L-methionyl-L-threonyl-[protein] + CoA + H(+). It catalyses the reaction N-terminal L-methionyl-L-lysyl-[protein] + acetyl-CoA = N-terminal N(alpha)-acetyl-L-methionyl-L-lysyl-[protein] + CoA + H(+). The enzyme catalyses N-terminal L-methionyl-L-leucyl-[protein] + acetyl-CoA = N-terminal N(alpha)-acetyl-L-methionyl-L-leucyl-[protein] + CoA + H(+). It carries out the reaction N-terminal L-methionyl-L-phenylalanyl-[protein] + acetyl-CoA = N-terminal N(alpha)-acetyl-L-methionyl-L-phenylalanyl-[protein] + CoA + H(+). The catalysed reaction is N-terminal L-methionyl-L-tyrosyl-[protein] + acetyl-CoA = N-terminal N(alpha)-acetyl-L-methionyl-L-tyrosyl-[protein] + CoA + H(+). N-alpha-acetyltransferase that acetylates the N-terminus of proteins that retain their initiating methionine. Has a broad substrate specificity: able to acetylate the initiator methionine of most peptides, except for those with a proline in second position. Also displays N-epsilon-acetyltransferase activity by mediating acetylation of the side chain of specific lysines on proteins. The relevance of N-epsilon-acetyltransferase activity is however unclear. Required for sister chromatid cohesion during mitosis by promoting binding of CDCA5/sororin to cohesin. This Xenopus laevis (African clawed frog) protein is N-alpha-acetyltransferase 50 (naa50).